Reading from the N-terminus, the 350-residue chain is Probable aldo-keto reductase 1 (350 aa).

Y67 serves as the catalytic Proton donor. Residue H135 coordinates substrate. Residue 214–224 (SPLGKGFFSSG) participates in NADP(+) binding.

The protein belongs to the aldo/keto reductase family.

The protein is Probable aldo-keto reductase 1 of Oryza sativa subsp. indica (Rice).